Here is a 312-residue protein sequence, read N- to C-terminus: Ribosomal RNA small subunit methyltransferase H (312 aa).

S-adenosyl-L-methionine contacts are provided by residues 37–39 (GGH), aspartate 57, phenylalanine 83, and aspartate 104.

The protein belongs to the methyltransferase superfamily. RsmH family.

Its subcellular location is the cytoplasm. The enzyme catalyses cytidine(1402) in 16S rRNA + S-adenosyl-L-methionine = N(4)-methylcytidine(1402) in 16S rRNA + S-adenosyl-L-homocysteine + H(+). Its function is as follows. Specifically methylates the N4 position of cytidine in position 1402 (C1402) of 16S rRNA. This chain is Ribosomal RNA small subunit methyltransferase H, found in Malacoplasma penetrans (strain HF-2) (Mycoplasma penetrans).